A 263-amino-acid polypeptide reads, in one-letter code: Acyl-[acyl-carrier-protein]--UDP-N-acetylglucosamine O-acyltransferase (263 aa).

This sequence belongs to the transferase hexapeptide repeat family. LpxA subfamily. As to quaternary structure, homotrimer.

It localises to the cytoplasm. The enzyme catalyses a (3R)-hydroxyacyl-[ACP] + UDP-N-acetyl-alpha-D-glucosamine = a UDP-3-O-[(3R)-3-hydroxyacyl]-N-acetyl-alpha-D-glucosamine + holo-[ACP]. It functions in the pathway glycolipid biosynthesis; lipid IV(A) biosynthesis; lipid IV(A) from (3R)-3-hydroxytetradecanoyl-[acyl-carrier-protein] and UDP-N-acetyl-alpha-D-glucosamine: step 1/6. Its function is as follows. Involved in the biosynthesis of lipid A, a phosphorylated glycolipid that anchors the lipopolysaccharide to the outer membrane of the cell. The chain is Acyl-[acyl-carrier-protein]--UDP-N-acetylglucosamine O-acyltransferase from Campylobacter jejuni subsp. jejuni serotype O:2 (strain ATCC 700819 / NCTC 11168).